Here is a 248-residue protein sequence, read N- to C-terminus: Cobalt transport protein CbiM (248 aa).

The first 31 residues, 1-31 (MLKVIKKYRKFITFLMIGLVYTLAYPATAHA), serve as a signal peptide directing secretion. The next 6 helical transmembrane spans lie at 39–59 (LPPR…IYGL), 75–95 (VMLA…LPSV), 107–127 (LGTV…VLLF), 139–159 (TLGA…YAVW), 173–195 (LFLC…LAIV), and 213–233 (IYAI…VIVY).

Belongs to the CbiM family. In terms of assembly, forms an energy-coupling factor (ECF) transporter complex composed of an ATP-binding protein (A component, CbiO), a transmembrane protein (T component, CbiQ) and 2 possible substrate-capture proteins (S components, CbiM and CbiN) of unknown stoichimetry.

It is found in the cell membrane. It functions in the pathway cofactor biosynthesis; adenosylcobalamin biosynthesis. Its function is as follows. Part of the energy-coupling factor (ECF) transporter complex CbiMNOQ involved in cobalt import. The sequence is that of Cobalt transport protein CbiM from Limosilactobacillus reuteri (strain DSM 20016) (Lactobacillus reuteri).